A 159-amino-acid chain; its full sequence is Ribosomal RNA large subunit methyltransferase H (159 aa).

Residues L76, G108, and 127 to 132 (FSKMTF) contribute to the S-adenosyl-L-methionine site.

The protein belongs to the RNA methyltransferase RlmH family. Homodimer.

It localises to the cytoplasm. The enzyme catalyses pseudouridine(1915) in 23S rRNA + S-adenosyl-L-methionine = N(3)-methylpseudouridine(1915) in 23S rRNA + S-adenosyl-L-homocysteine + H(+). Functionally, specifically methylates the pseudouridine at position 1915 (m3Psi1915) in 23S rRNA. This Clostridium botulinum (strain Eklund 17B / Type B) protein is Ribosomal RNA large subunit methyltransferase H.